We begin with the raw amino-acid sequence, 186 residues long: Nascent polypeptide-associated complex subunit beta (186 aa).

Positions 65–130 (GADDKKLQTT…GEEKELTELV (66 aa)) constitute an NAC-A/B domain. The tract at residues 153 to 186 (QNMQKQAGAEGKKDEDEDDIPDLVEGENFESNVE) is disordered. Over residues 167 to 186 (EDEDDIPDLVEGENFESNVE) the composition is skewed to acidic residues.

This sequence belongs to the NAC-beta family. In terms of assembly, part of the nascent polypeptide-associated complex (NAC), consisting of egd2 and egd1. NAC associates with ribosomes via egd1.

The protein localises to the cytoplasm. The protein resides in the nucleus. Its function is as follows. Component of the nascent polypeptide-associated complex (NAC), a dynamic component of the ribosomal exit tunnel, protecting the emerging polypeptides from interaction with other cytoplasmic proteins to ensure appropriate nascent protein targeting. The NAC complex also promotes mitochondrial protein import by enhancing productive ribosome interactions with the outer mitochondrial membrane and blocks the inappropriate interaction of ribosomes translating non-secretory nascent polypeptides with translocation sites in the membrane of the endoplasmic reticulum. EGD1 may act as a transcription factor that exert a negative effect on the expression of several genes that are transcribed by RNA polymerase II. This chain is Nascent polypeptide-associated complex subunit beta (egd1), found in Aspergillus fumigatus (strain ATCC MYA-4609 / CBS 101355 / FGSC A1100 / Af293) (Neosartorya fumigata).